Consider the following 353-residue polypeptide: Photosystem II D2 protein (353 aa).

An N-acetylthreonine modification is found at Thr2. Thr2 is subject to Phosphothreonine. The chain crosses the membrane as a helical span at residues 41-61 (CAYFALGGWFTGTTFVTSWYT). A chlorophyll a-binding site is contributed by His118. The helical transmembrane segment at 125–141 (GFMLRQFELARSVQLRP) threads the bilayer. Pheophytin a-binding residues include Gln130 and Asn143. The helical transmembrane segment at 153 to 166 (VFVSVFLIYPLGQS) threads the bilayer. His198 lines the chlorophyll a pocket. Residues 208–228 (AALLCAIHGATVENTLFEDGD) form a helical membrane-spanning segment. Positions 215 and 262 each coordinate a plastoquinone. His215 contacts Fe cation. His269 contributes to the Fe cation binding site. Residues 279–295 (GLWMSALGVVGLALNLR) traverse the membrane as a helical segment.

Belongs to the reaction center PufL/M/PsbA/D family. In terms of assembly, PSII is composed of 1 copy each of membrane proteins PsbA, PsbB, PsbC, PsbD, PsbE, PsbF, PsbH, PsbI, PsbJ, PsbK, PsbL, PsbM, PsbT, PsbX, PsbY, PsbZ, Psb30/Ycf12, at least 3 peripheral proteins of the oxygen-evolving complex and a large number of cofactors. It forms dimeric complexes. Requires The D1/D2 heterodimer binds P680, chlorophylls that are the primary electron donor of PSII, and subsequent electron acceptors. It shares a non-heme iron and each subunit binds pheophytin, quinone, additional chlorophylls, carotenoids and lipids. There is also a Cl(-1) ion associated with D1 and D2, which is required for oxygen evolution. The PSII complex binds additional chlorophylls, carotenoids and specific lipids. as cofactor.

The protein localises to the plastid. It is found in the chloroplast thylakoid membrane. It carries out the reaction 2 a plastoquinone + 4 hnu + 2 H2O = 2 a plastoquinol + O2. Its function is as follows. Photosystem II (PSII) is a light-driven water:plastoquinone oxidoreductase that uses light energy to abstract electrons from H(2)O, generating O(2) and a proton gradient subsequently used for ATP formation. It consists of a core antenna complex that captures photons, and an electron transfer chain that converts photonic excitation into a charge separation. The D1/D2 (PsbA/PsbD) reaction center heterodimer binds P680, the primary electron donor of PSII as well as several subsequent electron acceptors. D2 is needed for assembly of a stable PSII complex. The protein is Photosystem II D2 protein of Olimarabidopsis pumila (Dwarf rocket).